The sequence spans 517 residues: tRNA (guanine-N(7)-)-methyltransferase non-catalytic subunit trm82 (517 aa).

Positions 40–117 (WKSPVPESMS…TKNSSPKILE (78 aa)) are disordered. A compositionally biased stretch (basic and acidic residues) spans 52–64 (KTTEEETQTKNED). WD repeat units lie at residues 116 to 158 (LEPS…GLRQ), 260 to 301 (GHVS…HIIE), and 306 to 346 (GHIE…LLSK).

This sequence belongs to the WD repeat TRM82 family. Forms a heterodimer with the catalytic subunit trm8.

The protein localises to the nucleus. Its pathway is tRNA modification; N(7)-methylguanine-tRNA biosynthesis. Its function is as follows. Required for the formation of N(7)-methylguanine at position 46 (m7G46) in tRNA. In the complex, it is required to stabilize and induce conformational changes of the catalytic subunit. This Sclerotinia sclerotiorum (strain ATCC 18683 / 1980 / Ss-1) (White mold) protein is tRNA (guanine-N(7)-)-methyltransferase non-catalytic subunit trm82 (trm82).